A 105-amino-acid chain; its full sequence is uncharacterized protein (105 aa).

The tract at residues 22–105 (GSAGHGATEA…KKRIIKGKVM (84 aa)) is disordered. The span at 61-83 (HDSRPARGDARKRHCQENNKTDR) shows a compositional bias: basic and acidic residues. Residues 93–105 (NRRKKRIIKGKVM) are compositionally biased toward basic residues.

This is an uncharacterized protein from Escherichia coli (strain K12).